Reading from the N-terminus, the 133-residue chain is Small ribosomal subunit protein uS8 (133 aa).

The protein belongs to the universal ribosomal protein uS8 family. Part of the 30S ribosomal subunit. Contacts proteins S5 and S12.

In terms of biological role, one of the primary rRNA binding proteins, it binds directly to 16S rRNA central domain where it helps coordinate assembly of the platform of the 30S subunit. This Syntrophus aciditrophicus (strain SB) protein is Small ribosomal subunit protein uS8.